Reading from the N-terminus, the 359-residue chain is GTP 3',8-cyclase (359 aa).

The Radical SAM core domain maps to 33–260 (RFGRRHDSLR…PTGRENPSAP (228 aa)). Arg-42 contributes to the GTP binding site. The [4Fe-4S] cluster site is built by Cys-49 and Cys-53. Tyr-55 is a binding site for S-adenosyl-L-methionine. Cys-56 contributes to the [4Fe-4S] cluster binding site. Residue Arg-93 coordinates GTP. Gly-97 is an S-adenosyl-L-methionine binding site. Thr-124 is a binding site for GTP. Residue Ser-148 coordinates S-adenosyl-L-methionine. Lys-185 serves as a coordination point for GTP. Residue Met-219 participates in S-adenosyl-L-methionine binding. Cys-286 and Cys-289 together coordinate [4Fe-4S] cluster. A GTP-binding site is contributed by 291–293 (RLR). Residue Cys-303 participates in [4Fe-4S] cluster binding.

It belongs to the radical SAM superfamily. MoaA family. As to quaternary structure, monomer and homodimer. It depends on [4Fe-4S] cluster as a cofactor.

It catalyses the reaction GTP + AH2 + S-adenosyl-L-methionine = (8S)-3',8-cyclo-7,8-dihydroguanosine 5'-triphosphate + 5'-deoxyadenosine + L-methionine + A + H(+). It participates in cofactor biosynthesis; molybdopterin biosynthesis. Functionally, catalyzes the cyclization of GTP to (8S)-3',8-cyclo-7,8-dihydroguanosine 5'-triphosphate. In Rhodopirellula baltica (strain DSM 10527 / NCIMB 13988 / SH1), this protein is GTP 3',8-cyclase.